The primary structure comprises 99 residues: 10 kDa heat shock protein, mitochondrial (99 aa).

Belongs to the GroES chaperonin family. Homoheptamer arranged in a ring structure. 2 heptameric Hsp10 rings interact with a Hsp60 tetradecamer in the structure of a back-to-back double heptameric ring to form the symmetrical football complex.

It is found in the mitochondrion matrix. Co-chaperonin implicated in mitochondrial protein import and macromolecular assembly. Together with Hsp60, facilitates the correct folding of imported proteins. May also prevent misfolding and promote the refolding and proper assembly of unfolded polypeptides generated under stress conditions in the mitochondrial matrix. The functional units of these chaperonins consist of heptameric rings of the large subunit Hsp60, which function as a back-to-back double ring. In a cyclic reaction, Hsp60 ring complexes bind one unfolded substrate protein per ring, followed by the binding of ATP and association with 2 heptameric rings of the co-chaperonin Hsp10. This leads to sequestration of the substrate protein in the inner cavity of Hsp60 where, for a certain period of time, it can fold undisturbed by other cell components. Synchronous hydrolysis of ATP in all Hsp60 subunits results in the dissociation of the chaperonin rings and the release of ADP and the folded substrate protein. The sequence is that of 10 kDa heat shock protein, mitochondrial (hspe1) from Oryzias latipes (Japanese rice fish).